Here is an 845-residue protein sequence, read N- to C-terminus: Protein P (845 aa).

Residues 1–179 (MPLSYQHFRK…FCGSPYSWEQ (179 aa)) form a terminal protein domain (TP) region. A spacer region spans residues 180 to 348 (ELQHGRLVIK…YCLSHLVNLR (169 aa)). The tract at residues 226-245 (GLQPHQGPLASSQPGRSGSI) is disordered. The segment at 349 to 692 (EDWGPCDEHG…YMNLYPVARQ (344 aa)) is polymerase/reverse transcriptase domain (RT). One can recognise a Reverse transcriptase domain in the interval 359 to 602 (EHHIRIPRTP…YSLNFMGYII (244 aa)). 3 residues coordinate Mg(2+): Asp-431, Asp-553, and Asp-554.

This sequence belongs to the hepadnaviridae P protein family.

The catalysed reaction is DNA(n) + a 2'-deoxyribonucleoside 5'-triphosphate = DNA(n+1) + diphosphate. The enzyme catalyses Endonucleolytic cleavage to 5'-phosphomonoester.. Activated by host HSP70 and HSP40 in vitro to be able to bind the epsilon loop of the pgRNA. Because deletion of the RNase H region renders the protein partly chaperone-independent, the chaperones may be needed indirectly to relieve occlusion of the RNA-binding site by this domain. Inhibited by several reverse-transcriptase inhibitors: Lamivudine, Adefovir and Entecavir. Its function is as follows. Multifunctional enzyme that converts the viral RNA genome into dsDNA in viral cytoplasmic capsids. This enzyme displays a DNA polymerase activity that can copy either DNA or RNA templates, and a ribonuclease H (RNase H) activity that cleaves the RNA strand of RNA-DNA heteroduplexes in a partially processive 3'- to 5'-endonucleasic mode. Neo-synthesized pregenomic RNA (pgRNA) are encapsidated together with the P protein, and reverse-transcribed inside the nucleocapsid. Initiation of reverse-transcription occurs first by binding the epsilon loop on the pgRNA genome, and is initiated by protein priming, thereby the 5'-end of (-)DNA is covalently linked to P protein. Partial (+)DNA is synthesized from the (-)DNA template and generates the relaxed circular DNA (RC-DNA) genome. After budding and infection, the RC-DNA migrates in the nucleus, and is converted into a plasmid-like covalently closed circular DNA (cccDNA). The activity of P protein does not seem to be necessary for cccDNA generation, and is presumably released from (+)DNA by host nuclear DNA repair machinery. The protein is Protein P of Homo sapiens (Human).